A 217-amino-acid chain; its full sequence is MAAGSWTCLILAIALLCLPWLQEGSAFPTIPLSWLFNTAVFRAHHLHKLAFDTYPKLEEAYIPKEQKYSFLRNPQTSLCFSESIPTPSNKEETQQKSNLELLHISLLLIQSWLEPVQFLRSVFANHLVHTNSNFDIYLYLKKLEEGIQTLMERLEDGSPRTGQIFKETYSKYDTNSHNDDTLLKNYRLLYCFRKDMNKVETFLRTVRCRAVEGSCGF.

A signal peptide spans 1–26 (MAAGSWTCLILAIALLCLPWLQEGSA). Intrachain disulfides connect cysteine 79–cysteine 191 and cysteine 208–cysteine 215. 2 positions are modified to phosphoserine: serine 132 and serine 176.

Belongs to the somatotropin/prolactin family. As to expression, expressed in the placenta.

It is found in the secreted. In terms of biological role, plays an important role in growth control. Its major role in stimulating body growth is to stimulate the liver and other tissues to secrete IGF1. It stimulates both the differentiation and proliferation of myoblasts. It also stimulates amino acid uptake and protein synthesis in muscle and other tissues. The sequence is that of Growth hormone variant (GH2) from Macaca mulatta (Rhesus macaque).